Reading from the N-terminus, the 705-residue chain is DNA polymerase alpha subunit B (705 aa).

A disordered region spans residues 115-199 (KKRKLHGPFS…TPTTSRQNVP (85 aa)). A compositionally biased stretch (polar residues) spans 125–134 (LSDSKQTYNV). Ser-126 is modified (phosphoserine). Positions 181 to 197 (STFQTPTTNTPTTSRQN) are enriched in low complexity.

This sequence belongs to the DNA polymerase alpha subunit B family. As to quaternary structure, DNA polymerase alpha:primase is a four subunit enzyme complex, which is assembled throughout the cell cycle, and consists of the two DNA polymerase subunits A POL1 and B POL12, and the DNA primase large PRI2 and small PRI1 subunits. Subunit B POL12 binds to subunit A POL1. In terms of processing, phosphorylated in a cell cycle-dependent manner.

Its subcellular location is the nucleus. Non-catalytic component of DNA polymerase alpha, which in a complex with DNA primase (DNA polymerase alpha:primase) constitutes a replicative polymerase. POL12 may play an essential role at the early stage of chromosomal DNA replication by coupling DNA polymerase alpha to the cellular replication machinery. Interacts with MCM10. This is DNA polymerase alpha subunit B (POL12) from Saccharomyces cerevisiae (strain ATCC 204508 / S288c) (Baker's yeast).